Consider the following 294-residue polypeptide: 2-dehydro-3-deoxy-phosphogluconate/2-dehydro-3-deoxy-6-phosphogalactonate aldolase (294 aa).

Residues 43–44 (TT), 130–132 (YNY), and 155–157 (KDT) each bind substrate. Lys155 (schiff-base intermediate with substrate) is an active-site residue.

It belongs to the DapA family. KDPG aldolase subfamily. As to quaternary structure, homotetramer; dimer of dimers.

It carries out the reaction 2-dehydro-3-deoxy-6-phospho-D-gluconate = D-glyceraldehyde 3-phosphate + pyruvate. The enzyme catalyses 2-dehydro-3-deoxy-6-phospho-D-galactonate = D-glyceraldehyde 3-phosphate + pyruvate. Its pathway is carbohydrate acid metabolism; 2-dehydro-3-deoxy-D-gluconate degradation; D-glyceraldehyde 3-phosphate and pyruvate from 2-dehydro-3-deoxy-D-gluconate: step 2/2. Its function is as follows. Involved in the degradation of glucose and galactose via the Entner-Doudoroff pathway. Catalyzes the reversible cleavage of 2-keto-3-deoxy-6-phosphogluconate (KDPG) and 2-keto-3-deoxygluconate (KDG) forming pyruvate and glyceraldehyde 3-phosphate or glyceraldehyde, respectively. It is also able to catalyze the reversible cleavage of 2-keto-3-deoxy-6-phosphogalactonate (KDPGal) and 2-keto-3-deoxygalactonate (KDGal). It is equally active with both D- and L-glyceraldehyde. The polypeptide is 2-dehydro-3-deoxy-phosphogluconate/2-dehydro-3-deoxy-6-phosphogalactonate aldolase (Saccharolobus solfataricus (Sulfolobus solfataricus)).